The sequence spans 314 residues: Ribosomal RNA small subunit methyltransferase H (314 aa).

Residues 36–38, aspartate 56, phenylalanine 83, aspartate 104, and glutamine 111 contribute to the S-adenosyl-L-methionine site; that span reads AGH.

Belongs to the methyltransferase superfamily. RsmH family.

The protein localises to the cytoplasm. The enzyme catalyses cytidine(1402) in 16S rRNA + S-adenosyl-L-methionine = N(4)-methylcytidine(1402) in 16S rRNA + S-adenosyl-L-homocysteine + H(+). Functionally, specifically methylates the N4 position of cytidine in position 1402 (C1402) of 16S rRNA. The chain is Ribosomal RNA small subunit methyltransferase H from Brevibacillus brevis (strain 47 / JCM 6285 / NBRC 100599).